We begin with the raw amino-acid sequence, 207 residues long: Large ribosomal subunit protein uL18 (207 aa).

This sequence belongs to the universal ribosomal protein uL18 family. In terms of assembly, part of the 50S ribosomal subunit. Contacts the 5S and 23S rRNAs.

In terms of biological role, this is one of the proteins that bind and probably mediate the attachment of the 5S RNA into the large ribosomal subunit, where it forms part of the central protuberance. This is Large ribosomal subunit protein uL18 from Caldivirga maquilingensis (strain ATCC 700844 / DSM 13496 / JCM 10307 / IC-167).